A 254-amino-acid chain; its full sequence is uncharacterized protein (254 aa).

The segment at 60 to 161 (PKSPTTTSIS…PEIPQAAPGT (102 aa)) is disordered. 2 stretches are compositionally biased toward low complexity: residues 63-77 (PTTTSISTSTVSTTP) and 89-146 (TPIP…TTTS).

This is an uncharacterized protein from Caenorhabditis elegans.